Here is a 752-residue protein sequence, read N- to C-terminus: Zinc finger protein 184 (752 aa).

Positions 28–99 (VTFKDVIVDF…EPSIPVGTPG (72 aa)) constitute a KRAB domain. Phosphoserine is present on residues serine 117, serine 122, and serine 200. Residue lysine 207 forms a Glycyl lysine isopeptide (Lys-Gly) (interchain with G-Cter in SUMO2) linkage. 19 consecutive C2H2-type zinc fingers follow at residues 223-245 (CKCNECGKAFTYCSALIRHQRTH), 251-273 (YKCNECEKAFSRSENLINHQRIH), 279-301 (YKCDQCGKGFIEGPSLTQHQRIH), 307-329 (YKCDECGKAFSQRTHLVQHQRIH), 335-357 (YTCNECGKAFSQRGHFMEHQKIH), 363-385 (FKCDECDKTFTRSTHLTQHQKIH), 391-413 (YKCNECGKAFNGPSTFIRHHMIH), 419-441 (YECNECGKAFSQHSNLTQHQKTH), 447-469 (YDCAECGKSFSYWSSLAQHLKIH), 475-497 (YKCNECGKAFSYCSSLTQHRRIH), 503-525 (FECSECGKAFSYLSNLNQHQKTH), 531-553 (YECKECGKAFIRSSSLAKHERIH), 559-581 (YQCHECGKTFSYGSSLIQHRKIH), 587-609 (YKCNECGRAFNQNIHLTQHKRIH), 615-637 (YECAECGKAFRHCSSLAQHQKTH), 643-665 (YHCNKCEKAFSQSSHLAQHQRIH), 671-693 (YKCNECDKTFSRSTHLTEHQNTH), 699-721 (YNCNECRKTFSQSTYLIQHQRIH), and 727-749 (FGCNDCGKAFRYRSALNKHQRLH).

It belongs to the krueppel C2H2-type zinc-finger protein family.

Its subcellular location is the nucleus. In terms of biological role, may be involved in transcriptional regulation. The sequence is that of Zinc finger protein 184 (ZNF184) from Bos taurus (Bovine).